A 423-amino-acid polypeptide reads, in one-letter code: Methionine aminopeptidase 2 (423 aa).

Positions 1 to 17 (MTDVIDAKPEEAKKVPP) are enriched in basic and acidic residues. The tract at residues 1 to 89 (MTDVIDAKPE…IQPYKDDNAY (89 aa)) is disordered. The span at 18–29 (EVEDEDSGDESA) shows a compositional bias: acidic residues. Residues 41 to 54 (KKKKKKKKPKKKKK) are compositionally biased toward basic residues. A substrate-binding site is contributed by histidine 176. The a divalent metal cation site is built by aspartate 196, aspartate 207, and histidine 276. Histidine 284 contacts substrate. A divalent metal cation-binding residues include glutamate 309 and glutamate 404.

Belongs to the peptidase M24A family. Methionine aminopeptidase eukaryotic type 2 subfamily. Co(2+) is required as a cofactor. It depends on Zn(2+) as a cofactor. Mn(2+) serves as cofactor. The cofactor is Fe(2+).

It localises to the cytoplasm. It catalyses the reaction Release of N-terminal amino acids, preferentially methionine, from peptides and arylamides.. Cotranslationally removes the N-terminal methionine from nascent proteins. The N-terminal methionine is often cleaved when the second residue in the primary sequence is small and uncharged (Met-Ala-, Cys, Gly, Pro, Ser, Thr, or Val). This is Methionine aminopeptidase 2 from Schizophyllum commune (strain H4-8 / FGSC 9210) (Split gill fungus).